A 291-amino-acid chain; its full sequence is Elongation factor Ts (291 aa).

An involved in Mg(2+) ion dislocation from EF-Tu region spans residues Thr82 to Cys85.

Belongs to the EF-Ts family.

It is found in the cytoplasm. Functionally, associates with the EF-Tu.GDP complex and induces the exchange of GDP to GTP. It remains bound to the aminoacyl-tRNA.EF-Tu.GTP complex up to the GTP hydrolysis stage on the ribosome. The polypeptide is Elongation factor Ts (Methylobacillus flagellatus (strain ATCC 51484 / DSM 6875 / VKM B-1610 / KT)).